A 47-amino-acid polypeptide reads, in one-letter code: Protein PsbN (47 aa).

The chain crosses the membrane as a helical span at residues Val7–Asn29.

This sequence belongs to the PsbN family.

It localises to the plastid membrane. May play a role in photosystem I and II biogenesis. In Aneura mirabilis (Parasitic liverwort), this protein is Protein PsbN.